The primary structure comprises 1146 residues: Error-prone DNA polymerase (1146 aa).

Disordered stretches follow at residues 1 to 43 (MGWG…WSRK) and 154 to 178 (ATPE…PPGP). The span at 12-26 (ELERVLSGRPGRTDP) shows a compositional bias: basic and acidic residues.

It belongs to the DNA polymerase type-C family. DnaE2 subfamily.

The protein resides in the cytoplasm. It catalyses the reaction DNA(n) + a 2'-deoxyribonucleoside 5'-triphosphate = DNA(n+1) + diphosphate. In terms of biological role, DNA polymerase involved in damage-induced mutagenesis and translesion synthesis (TLS). It is not the major replicative DNA polymerase. The chain is Error-prone DNA polymerase from Nocardia farcinica (strain IFM 10152).